A 224-amino-acid polypeptide reads, in one-letter code: Inner membrane-spanning protein YciB (224 aa).

The next 6 helical transmembrane spans lie at 20–40 (GVNPVLKLVLELGPLLVFFFA), 61–81 (IFVATGLFMAATAIALIASWL), 86–106 (LPIMPMVSGVVVFIFGALTLY), 123–143 (LFGGVLLGGLYFGRSLLGYVF), 156–176 (KLTFRWGLFFLFLAVVNEVVW), and 187–207 (FKVWGIMPITLLFTFSQMPLI).

This sequence belongs to the YciB family.

The protein localises to the cell inner membrane. Its function is as follows. Plays a role in cell envelope biogenesis, maintenance of cell envelope integrity and membrane homeostasis. This chain is Inner membrane-spanning protein YciB, found in Mesorhizobium japonicum (strain LMG 29417 / CECT 9101 / MAFF 303099) (Mesorhizobium loti (strain MAFF 303099)).